The sequence spans 609 residues: NURS complex subunit pir2 (609 aa).

The span at 1 to 25 (MSEVHQESEVEYSRWKRERSPERSQ) shows a compositional bias: basic and acidic residues. Disordered regions lie at residues 1–60 (MSEV…RASG) and 187–210 (EKPS…QLSK). A compositionally biased stretch (low complexity) spans 27-36 (RSQSPPGEQS). Phosphoserine occurs at positions 28 and 30. A compositionally biased stretch (basic and acidic residues) spans 37–57 (AYHRERSPLRKRGNYYDDRTR). Residues 201 to 210 (LPSNDPQLSK) show a composition bias toward polar residues. The C2H2-type zinc-finger motif lies at 474–499 (YRCHVGTCAKLFLGPEFVRKHINKKH).

It belongs to the ARS2 family. Interacts with ccr4.

Its subcellular location is the nucleus. The polypeptide is NURS complex subunit pir2 (Schizosaccharomyces pombe (strain 972 / ATCC 24843) (Fission yeast)).